We begin with the raw amino-acid sequence, 487 residues long: b(0,+)-type amino acid transporter 1 (487 aa).

The segment covering 1–15 (MGDTGLRKRREDEKS) has biased composition (basic and acidic residues). The tract at residues 1–22 (MGDTGLRKRREDEKSIQSQEPK) is disordered. Over 1–31 (MGDTGLRKRREDEKSIQSQEPKTTSLQKELG) the chain is Cytoplasmic. Position 18 is a phosphoserine (serine 18). The chain crosses the membrane as a helical span at residues 32–55 (LISGISIIVGTIIGSGIFVSPKSV). Residue 43 to 47 (IIGSG) coordinates L-arginine. Topologically, residues 56–62 (LSNTEAV) are extracellular. A helical transmembrane segment spans residues 63–84 (GPCLIIWAACGVLATLGALCFA). The Cytoplasmic segment spans residues 85 to 110 (ELGTMITKSGGEYPYLMEAYGPIPAY). The chain crosses the membrane as a helical span at residues 111–137 (LFSWASLIVIKPTSFAIICLSFSEYVC). Residues 138 to 147 (APFYVGCKPP) lie on the Extracellular side of the membrane. 2 helical membrane-spanning segments follow: residues 148–169 (QIVV…NSLS) and 170–193 (VRLG…IIII). Residues 194 to 217 (SGLVLLAQGNTKNFDNSFEGAQLS) are Extracellular-facing. The chain crosses the membrane as a helical span at residues 218-238 (VGAISLAFYNGLWAYDGWNQL). Aspartate 233 lines the L-arginine pocket. Residues 239–251 (NYITEELRNPYRN) are Cytoplasmic-facing. The chain crosses the membrane as a helical span at residues 252 to 274 (LPLAIIIGIPLVTACYILMNVSY). Residues 275–302 (FTVMTATELLQSQAVAVTFGDRVLYPAS) are Extracellular-facing. Residues 303–325 (WIVPLFVAFSTIGAANGTCFTAG) form a helical membrane-spanning segment. Over 326–351 (RLIYVAGREGHMLKVLSYISVRRLTP) the chain is Cytoplasmic. 2 helical membrane passes run 352-370 (APAI…IPGD) and 371-391 (INSL…LTIL). Residues 392–410 (GLIVMRFTRKELERPIKVP) are Cytoplasmic-facing. The helical transmembrane segment at 411-431 (VVIPVLMTLISVFLVLAPIIS) threads the bilayer. Over 432 to 434 (KPT) the chain is Extracellular. Residues 435–450 (WEYLYCVLFILSGLLF) traverse the membrane as a helical segment. The Cytoplasmic segment spans residues 451 to 487 (YFLFVHYKFGWAQKISKPITMHLQMLMEVVPPEEDPE).

This sequence belongs to the amino acid-polyamine-organocation (APC) superfamily. Disulfide-linked heterodimer composed of the catalytic light chain subunit SLC7A9 and the heavy chain subunit SLC3A1. The heterodimer is the minimal functional unit. Assembles in heterotetramers (dimers of heterodimers) and higher order oligomers; the oligomerization is mediated by SLC3A1 likely to prevent degradation and facilitate heteromer trafficking to the plasma membrane. Interacts with CAV1. Expressed in the brush border membrane in the kidney (at protein level). Kidney, small intestine, liver and placenta.

Its subcellular location is the apical cell membrane. The protein localises to the cell membrane. The catalysed reaction is L-leucine(out) + L-arginine(in) = L-leucine(in) + L-arginine(out). The enzyme catalyses L-histidine(out) + L-arginine(in) = L-histidine(in) + L-arginine(out). It catalyses the reaction L-arginine(in) + L-phenylalanine(out) = L-arginine(out) + L-phenylalanine(in). It carries out the reaction L-cysteine(out) + L-arginine(in) = L-cysteine(in) + L-arginine(out). The catalysed reaction is L-cystine(out) + L-arginine(in) = L-cystine(in) + L-arginine(out). The enzyme catalyses L-lysine(out) + L-arginine(in) = L-lysine(in) + L-arginine(out). In terms of biological role, associates with SLC3A1 to form a functional transporter complex that mediates the electrogenic exchange between cationic amino acids and neutral amino acids, with a stoichiometry of 1:1. Has system b(0,+)-like activity with high affinity for extracellular cationic amino acids and L-cystine and lower affinity for intracellular neutral amino acids. Substrate exchange is driven by high concentration of intracellular neutral amino acids and the intracellular reduction of L-cystine to L-cysteine. Required for reabsorption of L-cystine and dibasic amino acids across the brush border membrane in renal proximal tubules. The protein is b(0,+)-type amino acid transporter 1 of Homo sapiens (Human).